The primary structure comprises 549 residues: Pyrophosphate--fructose 6-phosphate 1-phosphotransferase (549 aa).

G78 provides a ligand contact to diphosphate. Mg(2+) is bound at residue D172. Substrate-binding positions include 200 to 202 (TID), 239 to 240 (KY), 247 to 249 (MGR), E308, and 421 to 424 (YEGR). D202 (proton acceptor) is an active-site residue.

The protein belongs to the phosphofructokinase type A (PFKA) family. PPi-dependent PFK group II subfamily. Clade 'Long' sub-subfamily. As to quaternary structure, homodimer. Mg(2+) serves as cofactor.

The protein localises to the cytoplasm. The enzyme catalyses beta-D-fructose 6-phosphate + diphosphate = beta-D-fructose 1,6-bisphosphate + phosphate + H(+). It functions in the pathway carbohydrate degradation; glycolysis; D-glyceraldehyde 3-phosphate and glycerone phosphate from D-glucose: step 3/4. Non-allosteric. Functionally, catalyzes the phosphorylation of D-fructose 6-phosphate, the first committing step of glycolysis. Uses inorganic phosphate (PPi) as phosphoryl donor instead of ATP like common ATP-dependent phosphofructokinases (ATP-PFKs), which renders the reaction reversible, and can thus function both in glycolysis and gluconeogenesis. Consistently, PPi-PFK can replace the enzymes of both the forward (ATP-PFK) and reverse (fructose-bisphosphatase (FBPase)) reactions. The chain is Pyrophosphate--fructose 6-phosphate 1-phosphotransferase from Porphyromonas gingivalis (Bacteroides gingivalis).